The chain runs to 639 residues: Chaperone protein DnaK (639 aa).

Threonine 199 bears the Phosphothreonine; by autocatalysis mark. Residues 602 to 613 show a composition bias toward low complexity; that stretch reads AQAQQAAAGAEG. Residues 602 to 639 are disordered; the sequence is AQAQQAAAGAEGQPEDASAKQDDDVVDAEFEEVKDDKK. Positions 625–639 are enriched in acidic residues; sequence DVVDAEFEEVKDDKK.

This sequence belongs to the heat shock protein 70 family.

Acts as a chaperone. This chain is Chaperone protein DnaK, found in Pseudoalteromonas atlantica (strain T6c / ATCC BAA-1087).